Here is a 372-residue protein sequence, read N- to C-terminus: GTPase Obg (372 aa).

One can recognise an Obg domain in the interval 1–159 (MKFIDEARIE…RMLKLELKVL (159 aa)). A disordered region spans residues 128-147 (LHFKSSTNRAPRQKTDGKPG). Residues 160–334 (ADVGLLGMPN…LVYAIHDYLV (175 aa)) form the OBG-type G domain. Residues 166–173 (GMPNAGKS), 191–195 (FTTLA), 213–216 (DIPG), 284–287 (NKLD), and 315–317 (SAL) each bind GTP. Mg(2+) is bound by residues S173 and T193.

Belongs to the TRAFAC class OBG-HflX-like GTPase superfamily. OBG GTPase family. Monomer. Requires Mg(2+) as cofactor.

The protein localises to the cytoplasm. In terms of biological role, an essential GTPase which binds GTP, GDP and possibly (p)ppGpp with moderate affinity, with high nucleotide exchange rates and a fairly low GTP hydrolysis rate. Plays a role in control of the cell cycle, stress response, ribosome biogenesis and in those bacteria that undergo differentiation, in morphogenesis control. This is GTPase Obg from Burkholderia pseudomallei (strain 668).